The sequence spans 393 residues: Beta-1,4-galactosyltransferase 3 (393 aa).

Residues 1–10 (MLRRLLERPC) are Cytoplasmic-facing. A helical; Signal-anchor for type II membrane protein membrane pass occupies residues 11 to 31 (TLALLVGSQLAVMMYLSLGGF). Topologically, residues 32-393 (RSLSALFGRD…ANHTALRGSH (362 aa)) are lumenal. Asparagine 57 carries N-linked (GlcNAc...) asparagine glycosylation. Residues cysteine 77 and cysteine 119 are joined by a disulfide bond. 130-134 (PHRAR) is a UDP-alpha-D-galactose binding site. Asparagine 166 is a glycosylation site (N-linked (GlcNAc...) asparagine). UDP-alpha-D-galactose is bound by residues 169–171 (FNR), 196–197 (VD), tyrosine 226, and tryptophan 258. The cysteines at positions 190 and 209 are disulfide-linked. Aspartate 197 provides a ligand contact to Mn(2+). 260-263 (GEDD) is a binding site for N-acetyl-D-glucosamine. Histidine 291 is a binding site for Mn(2+). 291 to 293 (HRG) is a binding site for UDP-alpha-D-galactose. Arginine 303 is an N-acetyl-D-glucosamine binding site. Residues asparagine 337 and asparagine 385 are each glycosylated (N-linked (GlcNAc...) asparagine). Residues 339–393 (TADIGTDPRGPRAPSGPRYPPGSSQAFRQEMLQRRPPARPGPLSTANHTALRGSH) are disordered.

Belongs to the glycosyltransferase 7 family. Requires Mn(2+) as cofactor. Found in various tissues. Highest expression in placenta, prostate, testis, ovary, intestine and muscle, and in fetal brain.

It localises to the golgi apparatus. The protein localises to the golgi stack membrane. The enzyme catalyses an N-acetyl-beta-D-glucosaminyl derivative + UDP-alpha-D-galactose = a beta-D-galactosyl-(1-&gt;4)-N-acetyl-beta-D-glucosaminyl derivative + UDP + H(+). The catalysed reaction is N-acetyl-D-glucosamine + UDP-alpha-D-galactose = beta-D-galactosyl-(1-&gt;4)-N-acetyl-D-glucosamine + UDP + H(+). It catalyses the reaction a beta-D-GlcNAc-(1-&gt;3)-beta-D-Gal-(1-&gt;4)-beta-D-Glc-(1&lt;-&gt;1)-Cer(d18:1(4E)) + UDP-alpha-D-galactose = a neolactoside nLc4Cer(d18:1(4E)) + UDP + H(+). It carries out the reaction a beta-D-glucosylceramide + UDP-alpha-D-galactose = a beta-D-galactosyl-(1-&gt;4)-beta-D-glucosyl-(1&lt;-&gt;1)-ceramide + UDP + H(+). The enzyme catalyses a neolactoside IV(3)-beta-GlcNAc-nLc4Cer + UDP-alpha-D-galactose = a neolactoside nLc6Cer + UDP + H(+). It participates in protein modification; protein glycosylation. Its function is as follows. Responsible for the synthesis of complex-type N-linked oligosaccharides in many glycoproteins as well as the carbohydrate moieties of glycolipids. This Homo sapiens (Human) protein is Beta-1,4-galactosyltransferase 3.